A 339-amino-acid chain; its full sequence is Fructose-1,6-bisphosphatase, cytosolic (339 aa).

5 residues coordinate Mg(2+): glutamate 71, glutamate 100, aspartate 121, leucine 123, and aspartate 124. Substrate contacts are provided by residues 124–127, asparagine 215, tyrosine 247, tyrosine 267, and lysine 277; that span reads DGSS. Residue glutamate 283 coordinates Mg(2+).

It belongs to the FBPase class 1 family. Mg(2+) serves as cofactor.

The protein resides in the cytoplasm. The enzyme catalyses beta-D-fructose 1,6-bisphosphate + H2O = beta-D-fructose 6-phosphate + phosphate. The sequence is that of Fructose-1,6-bisphosphatase, cytosolic from Oryza sativa subsp. indica (Rice).